The primary structure comprises 573 residues: Sulfite reductase [NADPH] hemoprotein beta-component (573 aa).

Positions 438, 444, 483, and 487 each coordinate [4Fe-4S] cluster. Cys-487 lines the siroheme pocket.

The protein belongs to the nitrite and sulfite reductase 4Fe-4S domain family. As to quaternary structure, alpha(8)-beta(8). The alpha component is a flavoprotein, the beta component is a hemoprotein. The cofactor is siroheme. [4Fe-4S] cluster serves as cofactor.

The catalysed reaction is hydrogen sulfide + 3 NADP(+) + 3 H2O = sulfite + 3 NADPH + 4 H(+). It functions in the pathway sulfur metabolism; hydrogen sulfide biosynthesis; hydrogen sulfide from sulfite (NADPH route): step 1/1. Component of the sulfite reductase complex that catalyzes the 6-electron reduction of sulfite to sulfide. This is one of several activities required for the biosynthesis of L-cysteine from sulfate. This chain is Sulfite reductase [NADPH] hemoprotein beta-component, found in Nitrosomonas eutropha (strain DSM 101675 / C91 / Nm57).